A 663-amino-acid chain; its full sequence is MKPRLIFIFFACYFLNFLPFSNQLPCSYQNPRIEDILLEVPIEHEHPHRHRRGLPSSDPTSPPVEKFAPLRIQLHYDKSIQNLTAEVQNFVNTTLLPEAVGYWENALRVRPMTTPIRLRRKCISSFYYYKQGMRNVACDKGCRERTTCGEADIPRDHLLDCLACNNTDDCKTTGELGEGVKDTDFILYVTAHDSKRCEGPETLSYAAHCQQEADFDRPIAGNVNLCPSALSVHNHDYEILTSTVKHEILHALGFSVGLYAFFRDSEGKPRTKRNRYGRPTSLNKQKGYYDWDSNTITTVLRENWWTGEGKVIHPIHMMVTPKVREEARRHFGCDKLEGAELENQGGEGTYLTHWEKRAYENEAMTGTHTQNPVYSRLTLAFLEDTGWYQPNYEVAEDLHWGKQLGCDFAMKSCGEWIHEKKILGEDAYPYCSDIKHDGSKSMAITRCTTQRDSLALCNLVPFQKELPSQYRNFMSLPGVNPDGAKYYGGSVEMADYCPFLQEFEWKLIDKTQHKDSRCELEGNGKEGEDILEVYGANSKCFEFPKPWTERKCGRIRVLSHYMAGCYEHQCTNGTLYVGSYNATDMYPCYAENQKIHIKKVVDGWLREGSLICPKCEDYCTNCGPPIVIPDYIGDPELDEPCSSNFKLSVLAFLCYLIFLHIRS.

His246 is a binding site for Zn(2+). Residue Glu247 is part of the active site. Zn(2+) contacts are provided by His250 and His353.

This sequence belongs to the peptidase M8 family. Requires Zn(2+) as cofactor.

The protein resides in the cytoplasm. Functionally, essential for the coordination of mitotic progression, and also plays a role in cell migration. The sequence is that of Leishmanolysin-like peptidase from Caenorhabditis elegans.